The chain runs to 311 residues: Apolipoprotein E (311 aa).

The signal sequence occupies residues 1-18 (MKVWWAVLAAAILAGCRA). 8 tandem repeats follow at residues 74–95 (MLME…EQLS), 96–116 (PMAQ…GALE), 117–138 (ADME…AMLG), 139–160 (QSTE…KRLL), 161–182 (RDAE…EGAE), 183–204 (RGVS…LRVA), 205–226 (TVGT…ERLR), and 227–248 (GHLE…EQVE). The tract at residues 74–248 (MLMEETMKEV…RLNEVREQVE (175 aa)) is 8 X 22 AA approximate tandem repeats. Methionine sulfoxide is present on Met136. Ser140 bears the Phosphoserine mark. The tract at residues 151 to 161 (HLRKLRKRLLR) is LDL and other lipoprotein receptors binding. Residue 155–158 (LRKR) coordinates heparin. The interval 203–283 (VATVGTLAGR…SWFEPLVEDM (81 aa)) is lipid-binding and lipoprotein association. The O-linked (GalNAc...) threonine glycan is linked to Thr205. A heparin-binding site is contributed by 222-229 (GERLRGHL). Residues 259 to 311 (PQMRLQAEAFQARLKSWFEPLVEDMQRQWAGLVEKLQAAMPSKAPAAAPIENQ) form a homooligomerization region. The tract at residues 271–283 (RLKSWFEPLVEDM) is specificity for association with VLDL.

Belongs to the apolipoprotein A1/A4/E family. Homotetramer. May interact with ABCA1; functionally associated with ABCA1 in the biogenesis of HDLs. May interact with APP/A4 amyloid-beta peptide; the interaction is extremely stable in vitro but its physiological significance is unclear. May interact with MAPT. May interact with MAP2. In the cerebrospinal fluid, interacts with secreted SORL1. Interacts with PMEL; this allows the loading of PMEL luminal fragment on ILVs to induce fibril nucleation. Post-translationally, APOE exists as multiple glycosylated and sialylated glycoforms within cells and in plasma. The extent of glycosylation and sialylation are tissue and context specific. Glycated in plasma VLDL. In terms of processing, phosphorylated by FAM20C in the extracellular medium.

It localises to the secreted. Its subcellular location is the extracellular space. The protein localises to the extracellular matrix. It is found in the extracellular vesicle. The protein resides in the endosome. It localises to the multivesicular body. Functionally, APOE is an apolipoprotein, a protein associating with lipid particles, that mainly functions in lipoprotein-mediated lipid transport between organs via the plasma and interstitial fluids. APOE is a core component of plasma lipoproteins and is involved in their production, conversion and clearance. Apolipoproteins are amphipathic molecules that interact both with lipids of the lipoprotein particle core and the aqueous environment of the plasma. As such, APOE associates with chylomicrons, chylomicron remnants, very low density lipoproteins (VLDL) and intermediate density lipoproteins (IDL) but shows a preferential binding to high-density lipoproteins (HDL). It also binds a wide range of cellular receptors including the LDL receptor/LDLR and the very low-density lipoprotein receptor/VLDLR that mediate the cellular uptake of the APOE-containing lipoprotein particles. Finally, APOE also has a heparin-binding activity and binds heparan-sulfate proteoglycans on the surface of cells, a property that supports the capture and the receptor-mediated uptake of APOE-containing lipoproteins by cells. The sequence is that of Apolipoprotein E (APOE) from Oryctolagus cuniculus (Rabbit).